The sequence spans 329 residues: GTP 3',8-cyclase (329 aa).

One can recognise a Radical SAM core domain in the interval methionine 1–alanine 229. Residue arginine 8 participates in GTP binding. The [4Fe-4S] cluster site is built by cysteine 15 and cysteine 19. Tyrosine 21 contributes to the S-adenosyl-L-methionine binding site. Cysteine 22 is a [4Fe-4S] cluster binding site. Residue arginine 60 participates in GTP binding. Glycine 64 is an S-adenosyl-L-methionine binding site. GTP is bound at residue threonine 91. Serine 115 serves as a coordination point for S-adenosyl-L-methionine. GTP is bound at residue lysine 155. Methionine 189 provides a ligand contact to S-adenosyl-L-methionine. Positions 252 and 255 each coordinate [4Fe-4S] cluster. Arginine 257–arginine 259 is a GTP binding site. Residue cysteine 269 participates in [4Fe-4S] cluster binding.

It belongs to the radical SAM superfamily. MoaA family. As to quaternary structure, monomer and homodimer. [4Fe-4S] cluster serves as cofactor.

The catalysed reaction is GTP + AH2 + S-adenosyl-L-methionine = (8S)-3',8-cyclo-7,8-dihydroguanosine 5'-triphosphate + 5'-deoxyadenosine + L-methionine + A + H(+). The protein operates within cofactor biosynthesis; molybdopterin biosynthesis. Catalyzes the cyclization of GTP to (8S)-3',8-cyclo-7,8-dihydroguanosine 5'-triphosphate. This chain is GTP 3',8-cyclase, found in Rippkaea orientalis (strain PCC 8801 / RF-1) (Cyanothece sp. (strain PCC 8801)).